Reading from the N-terminus, the 504-residue chain is Arabinose import ATP-binding protein AraG (504 aa).

ABC transporter domains are found at residues 8–243 and 256–499; these read LSFR…MVGR and YGEE…MPKV. Position 40–47 (40–47) interacts with ATP; the sequence is GENGAGKS.

Belongs to the ABC transporter superfamily. Arabinose importer (TC 3.A.1.2.2) family. As to quaternary structure, the complex is composed of two ATP-binding proteins (AraG), two transmembrane proteins (AraH) and a solute-binding protein (AraF).

It is found in the cell inner membrane. The catalysed reaction is L-arabinose(out) + ATP + H2O = L-arabinose(in) + ADP + phosphate + H(+). Its function is as follows. Part of the ABC transporter complex AraFGH involved in arabinose import. Responsible for energy coupling to the transport system. This is Arabinose import ATP-binding protein AraG from Escherichia coli (strain UTI89 / UPEC).